Here is a 1413-residue protein sequence, read N- to C-terminus: Zinc finger protein 609 (1413 aa).

Disordered regions lie at residues M1–E26, Q47–S196, R354–L484, A517–A659, and P695–D765. Residues S358, S361, and S379 each carry the phosphoserine modification. T381 carries the post-translational modification Phosphothreonine. Over residues A386–A405 the composition is skewed to low complexity. A phosphoserine mark is found at S413, S433, S446, S452, S467, and S470. Polar residues predominate over residues A423–A437. K479 participates in a covalent cross-link: Glycyl lysine isopeptide (Lys-Gly) (interchain with G-Cter in SUMO2). The segment at I495–H520 adopts a C2H2-type zinc-finger fold. Positions A519–A529 are enriched in basic and acidic residues. Residues S533, S575, and S577 each carry the phosphoserine modification. Over residues S625 to P648 the composition is skewed to basic and acidic residues. Residues D725 to D735 show a composition bias toward basic residues. S742 is subject to Phosphoserine. At T745 the chain carries Phosphothreonine. The span at C750–A763 shows a compositional bias: basic and acidic residues. S757 carries the post-translational modification Phosphoserine. K788 is covalently cross-linked (Glycyl lysine isopeptide (Lys-Gly) (interchain with G-Cter in SUMO2)). A compositionally biased stretch (polar residues) spans F797–A843. Disordered regions lie at residues F797–Q962, Y1004–E1127, I1154–T1221, and S1273–H1369. Position 803 is a phosphoserine (S803). T822 is modified (phosphothreonine). A phosphoserine mark is found at S841, S845, and S848. Residues G854 to K875 are compositionally biased toward basic and acidic residues. Polar residues predominate over residues Y902–A916. The segment covering T925–E949 has biased composition (basic and acidic residues). The span at L950–Q962 shows a compositional bias: polar residues. A compositionally biased stretch (basic and acidic residues) spans G1022–Q1044. S1057 is subject to Phosphoserine. K1063 is covalently cross-linked (Glycyl lysine isopeptide (Lys-Gly) (interchain with G-Cter in SUMO2)). 3 stretches are compositionally biased toward basic and acidic residues: residues L1099–E1115, I1154–T1189, and P1197–P1210. A Glycyl lysine isopeptide (Lys-Gly) (interchain with G-Cter in SUMO2) cross-link involves residue K1155. Residues P1288 to S1298 are compositionally biased toward polar residues. K1299 participates in a covalent cross-link: Glycyl lysine isopeptide (Lys-Gly) (interchain with G-Cter in SUMO2). Residues G1330 to G1348 show a composition bias toward gly residues.

In terms of assembly, interacts (via N-terminus) with NIPBL. Interacts with the multiprotein complex Integrator. Expressed in myoblasts. Expressed in neurons in various brain regions, including striatum, prefrontal cortex, olfactory bulb, midbrain, cerebellum and hippocampus. Expressed in neural stem cells (at protein level). Expressed in thymocytes.

It is found in the nucleus. In terms of biological role, transcription factor, which activates RAG1, and possibly RAG2, transcription. Through the regulation of RAG1/2 expression, may regulate thymocyte maturation. Along with NIPBL and the multiprotein complex Integrator, promotes cortical neuron migration during brain development by regulating the transcription of crucial genes in this process. Preferentially binds promoters containing paused RNA polymerase II. Up-regulates the expression of SEMA3A, NRP1, PLXND1 and GABBR2 genes, among others. Functionally, involved in regulation of myoblast proliferation during myogenesis. The protein is Zinc finger protein 609 (Znf609) of Mus musculus (Mouse).